A 182-amino-acid polypeptide reads, in one-letter code: NADH-quinone oxidoreductase subunit I (182 aa).

4Fe-4S ferredoxin-type domains are found at residues 52–82 (LTRD…LQKA) and 92–121 (DFFR…LTPD). [4Fe-4S] cluster-binding residues include C62, C65, C68, C72, C101, C104, C107, and C111.

It belongs to the complex I 23 kDa subunit family. As to quaternary structure, NDH-1 is composed of 13 different subunits. Subunits NuoA, H, J, K, L, M, N constitute the membrane sector of the complex. Requires [4Fe-4S] cluster as cofactor.

Its subcellular location is the cell inner membrane. It catalyses the reaction a quinone + NADH + 5 H(+)(in) = a quinol + NAD(+) + 4 H(+)(out). Functionally, NDH-1 shuttles electrons from NADH, via FMN and iron-sulfur (Fe-S) centers, to quinones in the respiratory chain. The immediate electron acceptor for the enzyme in this species is believed to be ubiquinone. Couples the redox reaction to proton translocation (for every two electrons transferred, four hydrogen ions are translocated across the cytoplasmic membrane), and thus conserves the redox energy in a proton gradient. The polypeptide is NADH-quinone oxidoreductase subunit I (Pseudomonas syringae pv. tomato (strain ATCC BAA-871 / DC3000)).